A 39-amino-acid polypeptide reads, in one-letter code: Photosystem II reaction center protein L (39 aa).

A helical membrane pass occupies residues 16–37 (RTSLYLGLLLVAVLGILFSSYF).

It belongs to the PsbL family. PSII is composed of 1 copy each of membrane proteins PsbA, PsbB, PsbC, PsbD, PsbE, PsbF, PsbH, PsbI, PsbJ, PsbK, PsbL, PsbM, PsbT, PsbX, PsbY, PsbZ, Psb30/Ycf12, peripheral proteins PsbO, CyanoQ (PsbQ), PsbU, PsbV and a large number of cofactors. It forms dimeric complexes.

The protein resides in the cellular thylakoid membrane. One of the components of the core complex of photosystem II (PSII). PSII is a light-driven water:plastoquinone oxidoreductase that uses light energy to abstract electrons from H(2)O, generating O(2) and a proton gradient subsequently used for ATP formation. It consists of a core antenna complex that captures photons, and an electron transfer chain that converts photonic excitation into a charge separation. This subunit is found at the monomer-monomer interface and is required for correct PSII assembly and/or dimerization. Required for PSII activity, at least in part due to its effects on PSII assembly. May make specific contact(s) with lipids. In Synechocystis sp. (strain ATCC 27184 / PCC 6803 / Kazusa), this protein is Photosystem II reaction center protein L.